The primary structure comprises 142 residues: Small ribosomal subunit protein uS12 (142 aa).

A disordered region spans residues 1-30; sequence MGKTHGMGAARKLKSHRRTQRWADKSYKKS. Basic residues predominate over residues 11–20; sequence RKLKSHRRTQ. Positions 21–30 are enriched in basic and acidic residues; it reads RWADKSYKKS. Position 61 is a hydroxyproline (proline 61).

Belongs to the universal ribosomal protein uS12 family.

In Euphorbia esula (Leafy spurge), this protein is Small ribosomal subunit protein uS12 (RPS23).